Reading from the N-terminus, the 102-residue chain is Legumin-like protein Mac i 2 (102 aa).

Belongs to the 11S seed storage protein (globulins) family.

Functionally, seed storage protein. This Macadamia integrifolia (Macadamia nut) protein is Legumin-like protein Mac i 2.